We begin with the raw amino-acid sequence, 337 residues long: MATVDVINGDSISTLHSDIIQTQILTRLDGPTLASTATTSSYLQTLCTEEKLWQELSIDTWPSINDPRVVQAISSFPSGYRSFFADSYPFTEHTWQSEKHDPPTGLISAVDLYYRGEIIYSKVQEMETEKGKSGWFLSSPFRVDILDPKESVQTRIRYPGGDYEAWVKDMEESMKLNWILIDPIKKRAANISSRKAVSARRNWLTGDLEIRFSTVVTAEAAEVAAVVSCGSAEAWKEVDEEVGGEIHVRDVRLQVEDIEGKCMKGRDSLVILQGLLDGKRSCKDDEERRAKERYEEYVRMKIQWRENKERREKAQDTICMIFGFSMFVLLWSFILLR.

The F-box domain maps to 10-58; it reads DSISTLHSDIIQTQILTRLDGPTLASTATTSSYLQTLCTEEKLWQELSI.

The sequence is that of F-box protein At2g27310 from Arabidopsis thaliana (Mouse-ear cress).